A 778-amino-acid polypeptide reads, in one-letter code: MTTTTHILGYPRIGEKRELKFAQEKYWRGEIDQAELKKVGAELRHKNWQTQASAGLSFAVAGDFAWYDHVLTTTLLLGHVPKRHRHGFPDLDTLFRVGRGQSQSSCACHGAAASDMTKWFNTNYHYIVPEFSKEDTFEVSWPQLFEEVNEAVQAGHNVKPVLLGPLSYLYLGKEIEDGFDRLTLLPRLLTAYQAILAKLAKQGVEWVQIDEPILALELEKPWLDAFKLAYQVIRSDVKVLLTTYFDSVVDSLDRIVELSVDGLHVDLSAAPEQLDAVLAKLPQNWVLSLGVVNGRNVWRSDVKAQLERLQPVKAALGERLWVASSCSLLHSPVDLELEAGLSAEVRSWFAFAKQKVSEVVLLGKALDGDAAAIAQCEAYSQPIQARKSAAHVHKATVQSRVNAITAELAQRSVPYAERARHQAEVLQLPLLPTTTIGSFPQTSEIRVQRSAYRSGQLSSAEYEQALKGHIADAVKRQEALDLDVLVHGEAERNDMVEYFAENLAGFQTTQFGWVQSYGSRCVKPAIVVADIEREQPITVGWSTYAQSLTSKQMKGMLTGPVTILCWTFPREDISRKAIAQQLALALRDEVSDLQDAGINIIQIDEPAIREGLPLKKRDHQNYLDWAVEAFRISAASARPETQIHTHMCYSEFNEIIESVAALDADVITIETSRSNMELLKAFEEFNYPNEIGPGVYDIHSPNIPSEEWIVDLVKKAAQKIPVERLWVNPDCGLKTRNWPETEAALANLVSAAKRLRKEFAKETTAVNSEAVADVETEA.

5-methyltetrahydropteroyltri-L-glutamate-binding positions include 17-20 and Lys118; that span reads RELK. Residues 436–438 and Glu489 contribute to the L-homocysteine site; that span reads IGS. L-methionine-binding positions include 436 to 438 and Glu489; that span reads IGS. 5-methyltetrahydropteroyltri-L-glutamate contacts are provided by residues 520–521 and Trp566; that span reads RC. Asp604 lines the L-homocysteine pocket. Asp604 is an L-methionine binding site. A 5-methyltetrahydropteroyltri-L-glutamate-binding site is contributed by Glu610. His646, Cys648, and Glu670 together coordinate Zn(2+). Residue His699 is the Proton donor of the active site. Cys731 provides a ligand contact to Zn(2+).

It belongs to the vitamin-B12 independent methionine synthase family. Zn(2+) serves as cofactor.

The catalysed reaction is 5-methyltetrahydropteroyltri-L-glutamate + L-homocysteine = tetrahydropteroyltri-L-glutamate + L-methionine. The protein operates within amino-acid biosynthesis; L-methionine biosynthesis via de novo pathway; L-methionine from L-homocysteine (MetE route): step 1/1. Its function is as follows. Catalyzes the transfer of a methyl group from 5-methyltetrahydrofolate to homocysteine resulting in methionine formation. This Vibrio vulnificus (strain CMCP6) protein is 5-methyltetrahydropteroyltriglutamate--homocysteine methyltransferase.